We begin with the raw amino-acid sequence, 179 residues long: CASP-like protein 5A2 (179 aa).

Over 1-54 (MEATSHPAVHPVAVPPQFQGAGPPAIQMKDFPGSPGTAGGLALRFTQFGFSLIS) the chain is Cytoplasmic. Transmembrane regions (helical) follow at residues 55–75 (LCIM…FLVA) and 76–96 (TMVF…YALL). Topologically, residues 97–114 (TQRSFRNPLIVSLFVVGD) are cytoplasmic. The chain crosses the membrane as a helical span at residues 115 to 135 (WVTSTMTFAGACAAAGITVLI). Topologically, residues 136-154 (DNDLEQCGPNHCGRFEAAA) are extracellular. A helical transmembrane segment spans residues 155–175 (AMAFMSWTATTLSFCLSFWLL). At 176–179 (ASCR) the chain is on the cytoplasmic side.

This sequence belongs to the Casparian strip membrane proteins (CASP) family. As to quaternary structure, homodimer and heterodimers.

The protein localises to the cell membrane. The sequence is that of CASP-like protein 5A2 from Physcomitrium patens (Spreading-leaved earth moss).